A 482-amino-acid chain; its full sequence is tRNA sulfurtransferase (482 aa).

The THUMP domain maps to 61–165 (PAIRDALTRI…NDRLLLVKGR (105 aa)). ATP is bound by residues 183-184 (LI), Lys265, Gly287, and Gln296. A disulfide bond links Cys344 and Cys456. One can recognise a Rhodanese domain in the interval 404 to 482 (FGANDAILDI…GFSNVKVYRP (79 aa)). Cys456 (cysteine persulfide intermediate) is an active-site residue.

The protein belongs to the ThiI family.

The protein resides in the cytoplasm. The catalysed reaction is [ThiI sulfur-carrier protein]-S-sulfanyl-L-cysteine + a uridine in tRNA + 2 reduced [2Fe-2S]-[ferredoxin] + ATP + H(+) = [ThiI sulfur-carrier protein]-L-cysteine + a 4-thiouridine in tRNA + 2 oxidized [2Fe-2S]-[ferredoxin] + AMP + diphosphate. The enzyme catalyses [ThiS sulfur-carrier protein]-C-terminal Gly-Gly-AMP + S-sulfanyl-L-cysteinyl-[cysteine desulfurase] + AH2 = [ThiS sulfur-carrier protein]-C-terminal-Gly-aminoethanethioate + L-cysteinyl-[cysteine desulfurase] + A + AMP + 2 H(+). The protein operates within cofactor biosynthesis; thiamine diphosphate biosynthesis. In terms of biological role, catalyzes the ATP-dependent transfer of a sulfur to tRNA to produce 4-thiouridine in position 8 of tRNAs, which functions as a near-UV photosensor. Also catalyzes the transfer of sulfur to the sulfur carrier protein ThiS, forming ThiS-thiocarboxylate. This is a step in the synthesis of thiazole, in the thiamine biosynthesis pathway. The sulfur is donated as persulfide by IscS. The sequence is that of tRNA sulfurtransferase from Klebsiella pneumoniae (strain 342).